The chain runs to 366 residues: Probable cinnamyl alcohol dehydrogenase 3 (366 aa).

Residue C53 coordinates Zn(2+). S55 contributes to the NADP(+) binding site. Positions 75, 76, 106, 109, 112, 120, and 169 each coordinate Zn(2+). NADP(+)-binding positions include T173, 194-199, 217-222, T257, G281, and 304-306; these read GLGGLG, SSSPGK, and SNI.

Belongs to the zinc-containing alcohol dehydrogenase family. In terms of assembly, homodimer. Requires Zn(2+) as cofactor.

The enzyme catalyses (E)-cinnamyl alcohol + NADP(+) = (E)-cinnamaldehyde + NADPH + H(+). It catalyses the reaction (E)-coniferol + NADP(+) = (E)-coniferaldehyde + NADPH + H(+). It carries out the reaction (E)-sinapyl alcohol + NADP(+) = (E)-sinapaldehyde + NADPH + H(+). The catalysed reaction is (E)-4-coumaroyl alcohol + NADP(+) = (E)-4-coumaraldehyde + NADPH + H(+). The enzyme catalyses (E)-caffeyl alcohol + NADP(+) = (E)-caffeyl aldehyde + NADPH + H(+). Its pathway is aromatic compound metabolism; phenylpropanoid biosynthesis. In terms of biological role, involved in lignin biosynthesis. Catalyzes the final step specific for the production of lignin monomers. Catalyzes the NADPH-dependent reduction of coniferaldehyde, 5-hydroxyconiferaldehyde, sinapaldehyde, 4-coumaraldehyde and caffeyl aldehyde to their respective alcohols. The sequence is that of Probable cinnamyl alcohol dehydrogenase 3 from Oryza sativa subsp. japonica (Rice).